The sequence spans 230 residues: Prepilin leader peptidase/N-methyltransferase (230 aa).

Helical transmembrane passes span 1 to 21, 60 to 80, 84 to 104, 114 to 134, 140 to 160, 181 to 201, and 208 to 228; these read MIYF…WFYL, GHIL…QIAF, IFTV…YLDW, CLWL…LLTL, SAAS…FYYG, LETL…FSLI, and FLPF…VKYY.

The protein belongs to the peptidase A24 family.

It is found in the cell inner membrane. It carries out the reaction Typically cleaves a -Gly-|-Phe- bond to release an N-terminal, basic peptide of 5-8 residues from type IV prepilin, and then N-methylates the new N-terminal amino group, the methyl donor being S-adenosyl-L-methionine.. Plays a role in type II pseudopili formation by proteolytically removing the leader sequence from substrate proteins and subsequently monomethylating the alpha-amino group of the newly exposed N-terminal phenylalanine. Substrates include proteins required for biogenesis of the type II general secretory apparatus. The sequence is that of Prepilin leader peptidase/N-methyltransferase (hofD) from Haemophilus influenzae (strain ATCC 51907 / DSM 11121 / KW20 / Rd).